Reading from the N-terminus, the 266-residue chain is Protein-ADP-ribose hydrolase (266 aa).

A Macro domain is found at 74–265; it reads TDLKDLKPIK…LYKEAFNRDA (192 aa). The ADP-D-ribose site is built by aspartate 93, isoleucine 94, and asparagine 107. Zn(2+) contacts are provided by cysteine 113, histidine 118, and cysteine 120. Residues cysteine 120, isoleucine 121, aspartate 122, serine 212, threonine 213, glycine 214, and phenylalanine 216 each contribute to the ADP-D-ribose site.

Belongs to the MacroD-type family. Zn-Macro subfamily. Zn(2+) serves as cofactor.

The catalysed reaction is 4-O-(ADP-D-ribosyl)-L-aspartyl-[protein] + H2O = L-aspartyl-[protein] + ADP-D-ribose + H(+). In terms of biological role, ADP-ribosylhydrolase that specifically reverses the SirTM-mediated mono-ADP-ribosylation at an asparatate residue of GcvH-L, by releasing ADP-ribose from the target protein. May play a role in the regulation of the response to host-induced oxidative stress. The protein is Protein-ADP-ribose hydrolase of Staphylococcus aureus (strain MSSA476).